Consider the following 135-residue polypeptide: uncharacterized protein (135 aa).

Transmembrane regions (helical) follow at residues 7-25 (WSAA…EWTI), 29-51 (ILLT…TGNI), 64-85 (VFIF…EVGI), and 89-108 (ALIF…ISIF).

Belongs to the bacteriophage holin family. Cp-1 holin subfamily.

It is found in the cell membrane. This is an uncharacterized protein from Halalkalibacterium halodurans (strain ATCC BAA-125 / DSM 18197 / FERM 7344 / JCM 9153 / C-125) (Bacillus halodurans).